The following is a 209-amino-acid chain: Protein GrpE (209 aa).

Positions methionine 1–valine 13 are enriched in polar residues. Residues methionine 1–asparagine 27 form a disordered region. Positions glutamate 15–asparagine 27 are enriched in acidic residues.

Belongs to the GrpE family. Homodimer.

The protein localises to the cytoplasm. Participates actively in the response to hyperosmotic and heat shock by preventing the aggregation of stress-denatured proteins, in association with DnaK and GrpE. It is the nucleotide exchange factor for DnaK and may function as a thermosensor. Unfolded proteins bind initially to DnaJ; upon interaction with the DnaJ-bound protein, DnaK hydrolyzes its bound ATP, resulting in the formation of a stable complex. GrpE releases ADP from DnaK; ATP binding to DnaK triggers the release of the substrate protein, thus completing the reaction cycle. Several rounds of ATP-dependent interactions between DnaJ, DnaK and GrpE are required for fully efficient folding. In Shewanella sediminis (strain HAW-EB3), this protein is Protein GrpE.